Here is a 374-residue protein sequence, read N- to C-terminus: MKYELDTTDGRARRGRLIFERGVVETPAFMPVGTYGTVKGMTPEEVKETGAQILLGNTFHLWLRPGQEIMKLHGDLHDFMQWHGPILTDSGGFQVFSLGAMRKIKEEGVHFRNPINGDKVFLSPEKSMEIQYDLGSDIVMIFDECTPYPADWDYAKSSMEMSLRWAQRSRQRFDELNNKNALFGIIQGGVYEDLRDVSVKGLVDIGFDGYAVGGLAVGEPKEDMHRILEHVCPQIPEDKPRYLMGVGKPEDLVEGVRRGIDMFDCVMPTRNARNGHLFVTDGVVKIRNAKHKDDTSPLDKDCDCYTCRNYSRAYLHHLDRCNEILGARLNTIHNLRHYQRLMAGLREAIEQGKLELFVADFYGRIGKPVPPLNA.

Asp-89 acts as the Proton acceptor in catalysis. Substrate is bound by residues 89–93 (DSGGF), Asp-143, Gln-187, and Gly-214. The RNA binding stretch occupies residues 245–251 (GVGKPED). Asp-264 acts as the Nucleophile in catalysis. The segment at 269 to 273 (TRNAR) is RNA binding; important for wobble base 34 recognition. Cys-302, Cys-304, Cys-307, and His-333 together coordinate Zn(2+).

Belongs to the queuine tRNA-ribosyltransferase family. As to quaternary structure, homodimer. Within each dimer, one monomer is responsible for RNA recognition and catalysis, while the other monomer binds to the replacement base PreQ1. Requires Zn(2+) as cofactor.

The catalysed reaction is 7-aminomethyl-7-carbaguanine + guanosine(34) in tRNA = 7-aminomethyl-7-carbaguanosine(34) in tRNA + guanine. It functions in the pathway tRNA modification; tRNA-queuosine biosynthesis. Its function is as follows. Catalyzes the base-exchange of a guanine (G) residue with the queuine precursor 7-aminomethyl-7-deazaguanine (PreQ1) at position 34 (anticodon wobble position) in tRNAs with GU(N) anticodons (tRNA-Asp, -Asn, -His and -Tyr). Catalysis occurs through a double-displacement mechanism. The nucleophile active site attacks the C1' of nucleotide 34 to detach the guanine base from the RNA, forming a covalent enzyme-RNA intermediate. The proton acceptor active site deprotonates the incoming PreQ1, allowing a nucleophilic attack on the C1' of the ribose to form the product. After dissociation, two additional enzymatic reactions on the tRNA convert PreQ1 to queuine (Q), resulting in the hypermodified nucleoside queuosine (7-(((4,5-cis-dihydroxy-2-cyclopenten-1-yl)amino)methyl)-7-deazaguanosine). In Serratia proteamaculans (strain 568), this protein is Queuine tRNA-ribosyltransferase.